A 96-amino-acid polypeptide reads, in one-letter code: UPF0102 protein ML1607 (96 aa).

Belongs to the UPF0102 family.

This Mycobacterium leprae (strain TN) protein is UPF0102 protein ML1607.